The following is a 251-amino-acid chain: Ubiquinone/menaquinone biosynthesis C-methyltransferase UbiE (251 aa).

Residues Thr74, Asp95, and 123–124 (NA) contribute to the S-adenosyl-L-methionine site.

This sequence belongs to the class I-like SAM-binding methyltransferase superfamily. MenG/UbiE family.

The enzyme catalyses a 2-demethylmenaquinol + S-adenosyl-L-methionine = a menaquinol + S-adenosyl-L-homocysteine + H(+). It carries out the reaction a 2-methoxy-6-(all-trans-polyprenyl)benzene-1,4-diol + S-adenosyl-L-methionine = a 5-methoxy-2-methyl-3-(all-trans-polyprenyl)benzene-1,4-diol + S-adenosyl-L-homocysteine + H(+). Its pathway is quinol/quinone metabolism; menaquinone biosynthesis; menaquinol from 1,4-dihydroxy-2-naphthoate: step 2/2. It participates in cofactor biosynthesis; ubiquinone biosynthesis. Its function is as follows. Methyltransferase required for the conversion of demethylmenaquinol (DMKH2) to menaquinol (MKH2) and the conversion of 2-polyprenyl-6-methoxy-1,4-benzoquinol (DDMQH2) to 2-polyprenyl-3-methyl-6-methoxy-1,4-benzoquinol (DMQH2). This Shewanella oneidensis (strain ATCC 700550 / JCM 31522 / CIP 106686 / LMG 19005 / NCIMB 14063 / MR-1) protein is Ubiquinone/menaquinone biosynthesis C-methyltransferase UbiE.